The following is a 284-amino-acid chain: NH(3)-dependent NAD(+) synthetase (284 aa).

51 to 58 provides a ligand contact to ATP; the sequence is GISGGIDS. Asp-57 provides a ligand contact to Mg(2+). Arg-148 lines the deamido-NAD(+) pocket. Thr-168 contacts ATP. Mg(2+) is bound at residue Glu-173. Lys-181 and Asp-188 together coordinate deamido-NAD(+). ATP contacts are provided by Lys-197 and Thr-219. Position 268 to 269 (268 to 269) interacts with deamido-NAD(+); it reads HK.

Belongs to the NAD synthetase family. As to quaternary structure, homodimer.

It catalyses the reaction deamido-NAD(+) + NH4(+) + ATP = AMP + diphosphate + NAD(+) + H(+). It functions in the pathway cofactor biosynthesis; NAD(+) biosynthesis; NAD(+) from deamido-NAD(+) (ammonia route): step 1/1. Functionally, catalyzes the ATP-dependent amidation of deamido-NAD to form NAD. Uses ammonia as a nitrogen source. This Burkholderia mallei (strain NCTC 10247) protein is NH(3)-dependent NAD(+) synthetase.